A 1617-amino-acid chain; its full sequence is MDGQRQQTYIPAPPPPSATQPSQSHMLSLPPPPPRHLPTQPQGVMPPPPPGPPPGPPPGPGYGASKLANSQLQQQNNLGWQHNWARQALSQGFLPPPPPPPMVPTNQAYGRQTSFSVPNADGPITSATYVPGSNTFGAGVGIPGFDAHTRPSYEAYGTMSGSDRIRGPVHHLYESSGGDGSAYKRDGTVPPTPSARTMPSSLALHDNAQESVASSLPGATAQNHQSQTGQTNEPTKSPSHRQNNSNTLLGGMSPSEAAVQWPLDRVLLWLAKNGFSRDWQETFKTLQIEGADFLDIGHGANGRGNFNKMHNEVFPQLAKECEASGTGWDKERELGEGKRMRRLIRQIHDDDSFDVGIPAQKRRESQAPSEGAPDTSPKLSHEPQSAGPHSGTIENSPNLRAPQLAQPHRHSVQMRSVTLPIPTTHDIASSDFSQTDGISSRSDFSRSVLVGLGVDHRRQSPSMSSDNGNLVAPFRSYEDSPKSGSPATQHATLNQGLSSSSTGDLSVKYEHSRGNSSDSTMGRRYYESRKGQETIRPSPQEMCSRQWTGETSSSYPKEHKGIFNFLKKRSKGGDSTHPSPEEPNLESPTSPVNLRQNGPHLPYTKPSFNASDMSLGERPSSASMSDHERLRGKPAQKGKKWSFVTLDGWNYRLVDITDMDSVETLRAAICHNLGIADWASAQIFLTEPGQSDHEEPLNDTMLALCRRTKSDSIGSLKLFVRGTHLQPVPNHVPNFAGLGVPLPDKHTASPTHHLPRKPLDDEALSRIPPQPQTGPASPQLGIRPQQPKTPAAKFPARDAPQHTEGMSPVEGDQQVGISPEPDKADLLARHEEHKREVERKQKAYLSSKGPPQPRNDSYGETGYRRAGVIDFDERRVSPYEDKKADTLVPLRKPPSAPQESYTLTRINSLRKKDGDRPRAQPAVQTHGLGAVLASMGRMTSAIGTPAPSVPTPTSAGGKQTNFGSFGSPTQGNTKSAPQSSPEKESLDNPGNPAEHRHTKSTAPEIPKPTLQSRKSYGPEFDFEETEVSFQRSPRPQDDSDEDSDDGLFAIPLSNNKASTKENDSGSGTSEAQKRTEKPALTVNTESRLRKGLSVSFRSPSATRESFADANGDSGGREGASFLMAASPEDERPTPRRDSFARGDIWASRPPVEGVIDNLDDFFPDIDLDAPYLDGQGVSPPSSPANRAPPENDLHKKENQPSSSYTGEMNANAGDTLGSNEPTLKPQGGDVVARRNINRSGGGLTRGKSIREVAKGANQASRSRSIHTGNQKSGEILRRKSTKMFGAKIMQIKPKPGSRLSQLDPIPQNNTPSGVPQRQPTFRIIRGQLIGKGTYGRVYLGINADNGEVLAVKQVEINPRLAGQDTDRVKEMVAAMDQEIDTMQHLEHPNIVQYLGCERGEFSISIYLEYISGGSIGSCLRKHGKFEESVVKSLTRQTLSGLAYLHDQGILHRDLKADNILLDLDGTCKISDFGISKKTDDIYGNDSSNSMQGSVFWMAPEVIQSQGQGYSAKVDIWSLGCVVLEMFAGRRPWSKEEAIGAIFKLGSLSQAPPIPDDVSMTISPAALAFMYDCFTVPYRDSSERPTAQTLLTRHPFCEEDPNYNFLDTELYAKIRHVL.

9 disordered regions span residues 1–73 (MDGQ…SQLQ), 167–199 (GPVH…RTMP), 211–253 (SVAS…GGMS), 345–399 (RQIH…SPNL), 455–555 (DHRR…SSSY), 568–633 (KRSK…LRGK), 739–820 (GVPL…ISPE), 832–1144 (EHKR…RGDI), and 1165–1277 (IDLD…EILR). Residues 19-28 (TQPSQSHMLS) show a composition bias toward low complexity. The segment covering 44-60 (VMPPPPPGPPPGPPPGP) has biased composition (pro residues). Over residues 220–248 (TAQNHQSQTGQTNEPTKSPSHRQNNSNTL) the composition is skewed to polar residues. A compositionally biased stretch (polar residues) spans 482–504 (KSGSPATQHATLNQGLSSSSTGD). A compositionally biased stretch (basic and acidic residues) spans 524–533 (RYYESRKGQE). Composition is skewed to polar residues over residues 535–555 (IRPS…SSSY) and 586–596 (ESPTSPVNLRQ). Basic and acidic residues-rich tracts occupy residues 832-841 (EHKREVERKQ) and 871-885 (FDER…KKAD). Polar residues-rich tracts occupy residues 897-907 (PQESYTLTRIN) and 956-980 (GGKQ…PQSS). Composition is skewed to basic and acidic residues over residues 1128–1140 (EDER…DSFA) and 1189–1198 (PENDLHKKEN). Composition is skewed to polar residues over residues 1199 to 1208 (QPSSSYTGEM) and 1257 to 1272 (NQAS…NQKS). Positions 1323-1596 (IIRGQLIGKG…QTLLTRHPFC (274 aa)) constitute a Protein kinase domain. Residues 1329 to 1337 (IGKGTYGRV) and lysine 1352 each bind ATP.

This sequence belongs to the protein kinase superfamily. STE Ser/Thr protein kinase family. MAP kinase kinase kinase subfamily.

The enzyme catalyses L-seryl-[protein] + ATP = O-phospho-L-seryl-[protein] + ADP + H(+). It catalyses the reaction L-threonyl-[protein] + ATP = O-phospho-L-threonyl-[protein] + ADP + H(+). Mitogen-activated protein kinase kinase kinase; part of cell wall integrity (CWI) signaling pathway composed of pkcA, the bck1-mkk2-mpka MAPK cascade and the downstream rlmA transcription regulator. The CWI signaling pathway regulates cell wall integrity and pyomelanin formation. CWI also controls oxidative stress response, gliotoxin production, iron adaptation and asexual development. Finally, CWI is constitutively required for A.fumigatus to cope with the temperature increase found in the mammalian lung environment, during infection. This is Mitogen-activated protein kinase kinae kinase bck1 from Aspergillus fumigatus (strain ATCC MYA-4609 / CBS 101355 / FGSC A1100 / Af293) (Neosartorya fumigata).